Consider the following 208-residue polypeptide: FMN-dependent NADH:quinone oxidoreductase (208 aa).

FMN-binding positions include 17 to 19 (SNS), 99 to 102 (MWNL), and 143 to 146 (SRGG).

Belongs to the azoreductase type 1 family. As to quaternary structure, homodimer. FMN serves as cofactor.

It carries out the reaction 2 a quinone + NADH + H(+) = 2 a 1,4-benzosemiquinone + NAD(+). It catalyses the reaction N,N-dimethyl-1,4-phenylenediamine + anthranilate + 2 NAD(+) = 2-(4-dimethylaminophenyl)diazenylbenzoate + 2 NADH + 2 H(+). Functionally, quinone reductase that provides resistance to thiol-specific stress caused by electrophilic quinones. Also exhibits azoreductase activity. Catalyzes the reductive cleavage of the azo bond in aromatic azo compounds to the corresponding amines. The chain is FMN-dependent NADH:quinone oxidoreductase from Staphylococcus aureus (strain MSSA476).